Here is a 454-residue protein sequence, read N- to C-terminus: tRNA modification GTPase MnmE (454 aa).

Arg23, Glu80, and Lys120 together coordinate (6S)-5-formyl-5,6,7,8-tetrahydrofolate. The 162-residue stretch at Gly216–Gly377 folds into the TrmE-type G domain. A K(+)-binding site is contributed by Asn226. GTP-binding positions include Asn226–Ser231, Thr245–Thr251, Asp270–Gly273, Asn335–Asp338, and Ser358–Arg360. Ser230 contacts Mg(2+). K(+) is bound by residues Thr245, Ile247, and Thr250. Thr251 serves as a coordination point for Mg(2+). Residue Lys454 participates in (6S)-5-formyl-5,6,7,8-tetrahydrofolate binding.

This sequence belongs to the TRAFAC class TrmE-Era-EngA-EngB-Septin-like GTPase superfamily. TrmE GTPase family. In terms of assembly, homodimer. Heterotetramer of two MnmE and two MnmG subunits. K(+) serves as cofactor.

It localises to the cytoplasm. Exhibits a very high intrinsic GTPase hydrolysis rate. Involved in the addition of a carboxymethylaminomethyl (cmnm) group at the wobble position (U34) of certain tRNAs, forming tRNA-cmnm(5)s(2)U34. The polypeptide is tRNA modification GTPase MnmE (Shigella sonnei (strain Ss046)).